An 823-amino-acid chain; its full sequence is MGKNSLKRALELDVVDFAEHTSAHGIPRAYVSTGWRRYMWLLCFLFCLSCFGHQAYLIVERFNRNDIIVGVEIKFEEIKFPAVTICNMNPYKNSAARELGAIRNAIEAFELAIDKSDGNAHSKRKKRSANSKMVPIDLLCKEEHGMFTAHDYGHVECTCVTFEDMSKVGDTDDDEIFWNCHQRKDWTHKICHLAEGSNQLKTCKCFEDTCVSDEVTKQLVWPLQLSKNGTKLCISPESSGPRYCASAQKFQVSTCSNCDWLGKCEESDDMDLEEEIDSKTCICHHGNCFQIKGNVKKRKRRTPERKVHERLLSRYEGLLAVYSHCNCTKQHGCVSTSVPDMDLENSNKTCLCFYNKKNEQIWPCYKEPEWEERKCSRCNTMGDCVYSDKPKKQTISCLCATPIKMCVRIDPPQTNDTSLDDRVVKFWDIQPSTTMSPIVKKKEERDKAYGYTGVKDRIALRAKAMENMIFAVDALTEEEKWKISYNKSDFIMKCSFNGRECNVKHDFVEYLDPTYGACFTYGQKLGNNTNERSGPAYGLRLEVFVNVTEYLPTTEAAGVRLTVHATDEQPFPDTLGFSAPTGFVSSFGIKLKSMVRLPAPYGDCVREGKTEDFIYTQKAYNTEGCQRSCIQKHLSKTCGCGDPRFPPYRESKNCPVDDPYKRECIKNEMHVATRDSKKLGCSCKQPCNQDVYSVSYSASRWPAIAGDLSGCPLGMAAHHCLNYKREQGSMIEVYFEQLNYESLLESEAYGWSNLLSDFGGQLGLWMGVSVITIGEVACFFFEVFISLISSNRTKRRPARKSFSSSLRCSTDYNLNKDGFNLDN.

Residues 1–38 are Cytoplasmic-facing; sequence MGKNSLKRALELDVVDFAEHTSAHGIPRAYVSTGWRRY. Residues 39-59 traverse the membrane as a helical segment; the sequence is MWLLCFLFCLSCFGHQAYLIV. Over 60-767 the chain is Extracellular; that stretch reads ERFNRNDIIV…FGGQLGLWMG (708 aa). Cystine bridges form between Cys-86–Cys-518 and Cys-494–Cys-501. Residues Asn-228, Asn-326, Asn-347, Asn-415, and Asn-486 are each glycosylated (N-linked (GlcNAc...) asparagine). Residues Asn-527 and Asn-546 are each glycosylated (N-linked (GlcNAc...) asparagine). Intrachain disulfides connect Cys-604/Cys-687, Cys-625/Cys-683, Cys-629/Cys-681, and Cys-638/Cys-664. A GAS motif; ion selectivity filter motif is present at residues 767–769; sequence GVS. The helical transmembrane segment at 768-788 threads the bilayer; the sequence is VSVITIGEVACFFFEVFISLI. Residues 789–795 are Cytoplasmic-facing; the sequence is SSNRTKR.

This sequence belongs to the amiloride-sensitive sodium channel (TC 1.A.6) family. As to quaternary structure, homotrimer. Heterotrimer; with other ASIC proteins producing channel with different properties.

It localises to the cell membrane. The protein localises to the postsynaptic cell membrane. The protein resides in the cell projection. Its subcellular location is the dendrite. The enzyme catalyses Na(+)(in) = Na(+)(out). The catalysed reaction is K(+)(in) = K(+)(out). It carries out the reaction Li(+)(in) = Li(+)(out). It catalyses the reaction Ca(2+)(in) = Ca(2+)(out). Its function is as follows. Forms voltage-independent, pH-gated trimeric sodium channels that act as postsynaptic excitatory receptors in the nervous system, playing a crucial role in regulating synaptic plasticity, learning, and memory. Promotes synaptic vesicle fusion to positively regulate the release of dopamine at dopaminergic neuron synapses. Displays high selectivity for sodium ions but can also permit the permeation of other cations. This Caenorhabditis elegans protein is Degenerin-like protein asic-1.